A 477-amino-acid polypeptide reads, in one-letter code: Myc-associated zinc finger protein (477 aa).

Disordered regions lie at residues 59–78 (AQSP…APAA) and 121–146 (TVDT…PAAE). Residues 130–141 (PPAPPPPPPPVS) show a composition bias toward pro residues. 4 consecutive C2H2-type zinc fingers follow at residues 190–212 (YICA…EAIH), 279–301 (HACE…KLSH), 307–329 (YQCP…VRSH), and 337–360 (YNCS…RQVH). Ser361 is subject to Phosphoserine. The C2H2-type 5 zinc-finger motif lies at 366-388 (FKCEKCEAAFATKDRLRAHTVRH). A C2H2-type 6; atypical zinc finger spans residues 392–413 (VPCHVCGKMLSSAYISDHMKVH).

In terms of assembly, interacts with BPTF. As to quaternary structure, forms a heterodimer with MAZ isoform 2; the interaction inhibits MAZ isoform 1-mediated transcription activation. Forms a heterodimer with MAZ isoform 1; the interaction inhibits MAZ isoform 1-mediated transcription activation. As to expression, present in kidney, liver and brain. In the brain, highest levels are found in motor cortex and midfrontal cortex (at protein level). Expressed in the heart, brain, placenta, lung, liver, skeletal muscle and weakly expressed in the kidney. Expressed in the joint synovium.

The protein resides in the nucleus. Functionally, transcriptional regulator, potentially with dual roles in transcription initiation and termination. Binds DNA and functions as a transcriptional activator. Binds to two G/A-rich sites, ME1a1 and ME1a2, within the MYC promoter having greater affinity for the former. Also binds to multiple G/C-rich sites within the promoter of the Sp1 family of transcription factors. Its function is as follows. Binds DNA and functions as a transcriptional activator. Inhibits MAZ isoform 1-mediated transcription. In terms of biological role, binds DNA and functions as a transcriptional activator. The polypeptide is Myc-associated zinc finger protein (MAZ) (Homo sapiens (Human)).